Reading from the N-terminus, the 280-residue chain is Undecaprenyl-diphosphatase (280 aa).

Transmembrane regions (helical) follow at residues 1 to 21, 40 to 60, 89 to 109, 116 to 136, 146 to 166, 191 to 211, 227 to 247, and 260 to 280; these read MEWI…FLPI, GAAF…VFFW, WLVV…QNAI, LWIV…ADAV, LTVK…IPGV, FLLA…KIVA, LATV…LKFI, and IALG…ATLS.

Belongs to the UppP family.

The protein resides in the cell membrane. The catalysed reaction is di-trans,octa-cis-undecaprenyl diphosphate + H2O = di-trans,octa-cis-undecaprenyl phosphate + phosphate + H(+). Functionally, catalyzes the dephosphorylation of undecaprenyl diphosphate (UPP). Confers resistance to bacitracin. The chain is Undecaprenyl-diphosphatase from Renibacterium salmoninarum (strain ATCC 33209 / DSM 20767 / JCM 11484 / NBRC 15589 / NCIMB 2235).